Reading from the N-terminus, the 440-residue chain is Chromosome partition protein MukF (440 aa).

The leucine-zipper stretch occupies residues 208–236 (LSETSGTLRELQDTLEAAGDKLQANLLRI).

This sequence belongs to the MukF family. Interacts, and probably forms a ternary complex, with MukE and MukB via its C-terminal region. The complex formation is stimulated by calcium or magnesium. It is required for an interaction between MukE and MukB.

It localises to the cytoplasm. It is found in the nucleoid. Functionally, involved in chromosome condensation, segregation and cell cycle progression. May participate in facilitating chromosome segregation by condensation DNA from both sides of a centrally located replisome during cell division. Not required for mini-F plasmid partitioning. Probably acts via its interaction with MukB and MukE. Overexpression results in anucleate cells. It has a calcium binding activity. This is Chromosome partition protein MukF from Escherichia coli (strain UTI89 / UPEC).